We begin with the raw amino-acid sequence, 223 residues long: Ribose-5-phosphate isomerase A (223 aa).

Residues 32-35, 83-86, and 96-99 each bind substrate; these read TGST, DGAD, and KGGG. The active-site Proton acceptor is glutamate 105. Lysine 123 contacts substrate.

Belongs to the ribose 5-phosphate isomerase family. Homodimer.

The catalysed reaction is aldehydo-D-ribose 5-phosphate = D-ribulose 5-phosphate. The protein operates within carbohydrate degradation; pentose phosphate pathway; D-ribose 5-phosphate from D-ribulose 5-phosphate (non-oxidative stage): step 1/1. In terms of biological role, catalyzes the reversible conversion of ribose-5-phosphate to ribulose 5-phosphate. The polypeptide is Ribose-5-phosphate isomerase A (Acinetobacter baumannii (strain AYE)).